The sequence spans 404 residues: Ammonium transporter (404 aa).

9 consecutive transmembrane segments (helical) span residues 7–27 (VFMF…ALFY), 44–64 (FSSI…LAFA), 96–116 (LFMM…SGAF), 125–145 (FLLF…HWVW), 158–178 (FAGG…LAIV), 227–247 (INTN…EWII), 254–274 (LGAV…AGFV), 277–297 (FASI…VFSL), and 352–372 (IVAI…IIKI).

Belongs to the ammonia transporter channel (TC 1.A.11.2) family. Interacts with NrgB for a correct localization of the latter. GlnK-AmtB complex interacts with TnrA.

Its subcellular location is the cell membrane. In terms of biological role, functions as an ammonium and methylammonium transporter in the absence of glutamine. Required for ammonium utilization at low concentrations or at low pH values, when ammonium is the single nitrogen source. Required for binding of NrgB to the membrane. Interaction between GlnK-AmtB complex and TnrA protects TnrA from proteolytic degradation. The chain is Ammonium transporter from Bacillus subtilis (strain 168).